A 443-amino-acid chain; its full sequence is MDLALFFRNEVKPALGCTEPGAVAYAASIAARHCPGEPLSVALSLSLSMFKNGRDVGIPGTGGLRGNRLAAVLGVLAGDADKGLMALEHIDMAVVERAQTLLDAGMVTEEVVDGVPGVYAAVTLRCAGHEVTVTVAGRHDRVASIVVDGEVVGGEGMERAPEADGTLHGGASCEPSASFTKPPLPAYLEELRECDFAQLWDMAAGIDATLEQELLRGAAMNMAVARMGLESGWGLGVGHTLAAHAEAADLHARIRFMAGAAADVRMAGAPQPVMSSAGSGNHGITATVPVAVAAEGLGVSPRVQAEALALSHLVTGYLKAHTGRLTPICGCSVAAGAGAAAGIVKVLGGNAVQAERAVASLMASLMGMLCDGAKGSCGLKVATAAGEAYAAALLGMDDRGVQRPEGVVNPDIATTARALARLSREGFAAADAVMVELLGGGKH.

The protein belongs to the UPF0597 family.

The polypeptide is UPF0597 protein DVU_0440 (Nitratidesulfovibrio vulgaris (strain ATCC 29579 / DSM 644 / CCUG 34227 / NCIMB 8303 / VKM B-1760 / Hildenborough) (Desulfovibrio vulgaris)).